Reading from the N-terminus, the 84-residue chain is Large ribosomal subunit protein bL27 (84 aa).

Positions 1–20 are disordered; sequence MAHKKGGGSTKNGRDSNPKY.

It belongs to the bacterial ribosomal protein bL27 family.

The sequence is that of Large ribosomal subunit protein bL27 (rpmA) from Prosthecochloris vibrioformis (Chlorobium vibrioforme).